Reading from the N-terminus, the 204-residue chain is Tumor necrosis factor alpha-induced protein 8-like protein 3 (204 aa).

Over residues 1-10 the composition is skewed to acidic residues; it reads MDSDSGEQSE. The tract at residues 1–20 is disordered; sequence MDSDSGEQSEGEPGTAAGPH. The tract at residues 21 to 204 is binding to phosphoinositides; sequence VFSSKNLALQ…INKLLDDKIL (184 aa).

This sequence belongs to the TNFAIP8 family. Widely expressed (at protein level).

It is found in the cytoplasm. The protein localises to the cell membrane. Acts as a lipid transfer protein. Preferentially captures and shuttles two lipid second messengers, i.e., phosphatidylinositol 4,5- bisphosphate and phosphatidylinositol 3,4,5-trisphosphate and increases their levels in the plasma membrane. Additionally, may also function as a lipid-presenting protein to enhance the activity of the PI3K-AKT and MEK-ERK pathways. May act as a regulator of tumorigenesis through its activation of phospholipid signaling. In Mus musculus (Mouse), this protein is Tumor necrosis factor alpha-induced protein 8-like protein 3 (Tnfaip8l3).